The chain runs to 352 residues: Palmitoyltransferase PFA5 (352 aa).

2 consecutive transmembrane segments (helical) span residues 12-32 (YWTI…GTWA) and 53-73 (IGLI…WVLI). Positions 114–164 (VWCSNCQSLKVGRTKHSSHQGHCVPRFDHYCVWLGAVIGFKNYRLFVQFVF) constitute a DHHC domain. Cys144 acts as the S-palmitoyl cysteine intermediate in catalysis. Transmembrane regions (helical) follow at residues 159-179 (FVQF…TISV) and 195-215 (LIVL…LFVS).

It belongs to the DHHC palmitoyltransferase family. PFA5 subfamily.

Its subcellular location is the membrane. It carries out the reaction L-cysteinyl-[protein] + hexadecanoyl-CoA = S-hexadecanoyl-L-cysteinyl-[protein] + CoA. This chain is Palmitoyltransferase PFA5 (PFA5), found in Candida glabrata (strain ATCC 2001 / BCRC 20586 / JCM 3761 / NBRC 0622 / NRRL Y-65 / CBS 138) (Yeast).